Consider the following 267-residue polypeptide: MNFGKAILKATRRGEHTRIWEYSQAPLQWLGSPGEPPVYYLRNPNGGLLGGDRHRIEIGLGPGSALEIRTQGAMRLHPGLIRQQVKVKLAPTSQLIWIPHPTIPGAGADFRQQVQIELDPTARLAYAEIWTAGRLAMDERWQFEHLANCLQVWVTAGIPSSPEGRKLWLQEHIDLHFPHRQVSAASVLGSHLCWGSLYLLGDWPEPTWLTVHISGTESPYWLVKSPDPICKGWILRQVGPQAEAIWRHFGQVALQLAQAKGGSPQGW.

The protein belongs to the UreD family. In terms of assembly, ureD, UreF and UreG form a complex that acts as a GTP-hydrolysis-dependent molecular chaperone, activating the urease apoprotein by helping to assemble the nickel containing metallocenter of UreC. The UreE protein probably delivers the nickel.

It localises to the cytoplasm. Required for maturation of urease via the functional incorporation of the urease nickel metallocenter. This Synechococcus sp. (strain JA-2-3B'a(2-13)) (Cyanobacteria bacterium Yellowstone B-Prime) protein is Urease accessory protein UreD.